The chain runs to 232 residues: 7-cyano-7-deazaguanine synthase (232 aa).

An ATP-binding site is contributed by 7–17 (CSGGLDSVSLA). 4 residues coordinate Zn(2+): C185, C193, C196, and C199.

The protein belongs to the QueC family. Zn(2+) serves as cofactor.

It carries out the reaction 7-carboxy-7-deazaguanine + NH4(+) + ATP = 7-cyano-7-deazaguanine + ADP + phosphate + H2O + H(+). The protein operates within purine metabolism; 7-cyano-7-deazaguanine biosynthesis. In terms of biological role, catalyzes the ATP-dependent conversion of 7-carboxy-7-deazaguanine (CDG) to 7-cyano-7-deazaguanine (preQ(0)). This chain is 7-cyano-7-deazaguanine synthase, found in Brucella canis (strain ATCC 23365 / NCTC 10854 / RM-666).